The following is a 260-amino-acid chain: MLLAIDSGNTNIVFAVYDGDTLRGEWRASTDSERTADELGVWLTQLLTIEGLNRLDISAAIIASVVPAMVFGLKTLCRRYFKCEPLVVGDEGVDLGLSILLDRPEEVGADRLVNAVAAHKYYKGPLIVIDFGTATTFDVVDADGNYCGGAISPGINLSLEALHMAAAKLPRVAIGRPRQVIGRATVPAMQSGIFWGYVGLIEGLVKRIKEEFGSDMLVLATGGLAPLFAEATKVINALDADLTLRGLLEIHRRNSTPVRG.

Residue 6–13 (DSGNTNIV) participates in ATP binding. Residue 108-111 (GADR) coordinates substrate. Aspartate 110 serves as the catalytic Proton acceptor. Aspartate 130 serves as a coordination point for K(+). Position 133 (threonine 133) interacts with ATP. Threonine 185 contributes to the substrate binding site.

This sequence belongs to the type III pantothenate kinase family. Homodimer. The cofactor is NH4(+). K(+) is required as a cofactor.

Its subcellular location is the cytoplasm. It catalyses the reaction (R)-pantothenate + ATP = (R)-4'-phosphopantothenate + ADP + H(+). It participates in cofactor biosynthesis; coenzyme A biosynthesis; CoA from (R)-pantothenate: step 1/5. Functionally, catalyzes the phosphorylation of pantothenate (Pan), the first step in CoA biosynthesis. The chain is Type III pantothenate kinase from Paramagnetospirillum magneticum (strain ATCC 700264 / AMB-1) (Magnetospirillum magneticum).